A 185-amino-acid chain; its full sequence is MIAAGDFRKGVTIEVDGQVFTVVDFMHVKPGKGAAFVRTKLKNVMTGAVIEKTFSPTEKFEEAVIERREMQYLYNDGELYYFMDTETYEQIPLNYDKVEDAIKYIKENMVVTVKFYKGEAFSVEPPTFVELEVVETEPGFRGDTATGGSKPATVETGAVIQVPLFINVGDKIRIDTRTGEYLERV.

The protein belongs to the elongation factor P family.

Its subcellular location is the cytoplasm. It participates in protein biosynthesis; polypeptide chain elongation. In terms of biological role, involved in peptide bond synthesis. Stimulates efficient translation and peptide-bond synthesis on native or reconstituted 70S ribosomes in vitro. Probably functions indirectly by altering the affinity of the ribosome for aminoacyl-tRNA, thus increasing their reactivity as acceptors for peptidyl transferase. This is Elongation factor P from Thermoanaerobacter sp. (strain X514).